The sequence spans 232 residues: T-cell surface glycoprotein CD1b-3 (232 aa).

At 1-201 the chain is on the extracellular side; the sequence is GLQEFQFEYP…LYWGHPMYIG (201 aa). 3 disulfide bridges follow: C19/C83, C48/C62, and C123/C178. N45 is a glycosylation site (N-linked (GlcNAc...) asparagine). The 111-residue stretch at 84–194 folds into the Ig-like domain; the sequence is PRYLLGVLDA…LGDQDIILYW (111 aa). A helical transmembrane segment spans residues 202–222; sequence LIFVAIIVPSLILLICLALWF. Residues 223–232 are Cytoplasmic-facing; sequence WRRWSYQTVL.

Heterodimer with B2M (beta-2-microglobulin). Interacts with saposin C.

It localises to the cell membrane. The protein localises to the endosome membrane. Its subcellular location is the lysosome membrane. Functionally, antigen-presenting protein that binds self and non-self lipid and glycolipid antigens and presents them to T-cell receptors on natural killer T-cells. This is T-cell surface glycoprotein CD1b-3 from Ovis aries (Sheep).